The chain runs to 54 residues: Photoreceptor disk component PRCD (54 aa).

A lipid anchor (S-palmitoyl cysteine) is attached at C2. The tract at residues 24-54 (QPEPNGVDGAVSGSSLETDLQSSGREKEPLK) is disordered. Polar residues predominate over residues 35-46 (SGSSLETDLQSS).

The protein belongs to the PRCD family. Interacts with RHO/rhodopsin; the interaction promotes PRCD stability. Palmitoylated at Cys-2. Palmitoylation is essential for protein stability and trafficking to the photoreceptor outer segment, but does not appear to be essential for membrane localization. Probably palmitoylated by ZDHHC3. In terms of processing, phosphorylated. Expressed in retina (at protein level).

It localises to the cell projection. Its subcellular location is the cilium. The protein localises to the photoreceptor outer segment. It is found in the membrane. The protein resides in the endoplasmic reticulum. It localises to the golgi apparatus. Its function is as follows. Involved in vision. The protein is Photoreceptor disk component PRCD of Bos taurus (Bovine).